The primary structure comprises 64 residues: Large ribosomal subunit protein bL35 (64 aa).

The segment covering 1 to 42 (MPKAKTHSGASKRFRRTGTGKIVRQKANRRHLLEHKSSKRTR) has biased composition (basic residues). Residues 1–64 (MPKAKTHSGA…TKRVKSLLNG (64 aa)) form a disordered region.

This sequence belongs to the bacterial ribosomal protein bL35 family.

This chain is Large ribosomal subunit protein bL35, found in Mycobacterium ulcerans (strain Agy99).